The following is a 143-amino-acid chain: Nucleoside diphosphate kinase (143 aa).

Positions 11, 59, 87, 93, 104, and 114 each coordinate ATP. The active-site Pros-phosphohistidine intermediate is the His117.

The protein belongs to the NDK family. As to quaternary structure, homotetramer. Requires Mg(2+) as cofactor.

It is found in the cytoplasm. The enzyme catalyses a 2'-deoxyribonucleoside 5'-diphosphate + ATP = a 2'-deoxyribonucleoside 5'-triphosphate + ADP. The catalysed reaction is a ribonucleoside 5'-diphosphate + ATP = a ribonucleoside 5'-triphosphate + ADP. In terms of biological role, major role in the synthesis of nucleoside triphosphates other than ATP. The ATP gamma phosphate is transferred to the NDP beta phosphate via a ping-pong mechanism, using a phosphorylated active-site intermediate. This is Nucleoside diphosphate kinase from Shewanella sp. (strain W3-18-1).